A 285-amino-acid chain; its full sequence is V-type proton ATPase subunit D (285 aa).

Basic and acidic residues predominate over residues 208 to 226 (QKTKENAEKADSVTKEEHQ). The segment at 208–285 (QKTKENAEKA…ENDSDEEVIF (78 aa)) is disordered. Residue serine 219 is modified to Phosphoserine. Polar residues predominate over residues 227 to 236 (GGSNTLQQTK). Over residues 248-263 (VGKEVINEVENSKDDT) the composition is skewed to basic and acidic residues. A compositionally biased stretch (acidic residues) spans 271 to 285 (TDDEEENDSDEEVIF).

Belongs to the V-ATPase D subunit family. As to quaternary structure, V-ATPase is a heteromultimeric enzyme composed of a peripheral catalytic V1 complex (components A to H) attached to an integral membrane V0 proton pore complex (components: a, c, c', c'', d, e, f and VOA1).

Its subcellular location is the vacuole membrane. In terms of biological role, subunit of the V1 complex of vacuolar(H+)-ATPase (V-ATPase), a multisubunit enzyme composed of a peripheral complex (V1) that hydrolyzes ATP and a membrane integral complex (V0) that translocates protons. V-ATPase is responsible for acidifying and maintaining the pH of intracellular compartments. The polypeptide is V-type proton ATPase subunit D (vma8) (Schizosaccharomyces pombe (strain 972 / ATCC 24843) (Fission yeast)).